A 331-amino-acid polypeptide reads, in one-letter code: Phenylalanine--tRNA ligase alpha subunit (331 aa).

Glu-254 contributes to the Mg(2+) binding site.

It belongs to the class-II aminoacyl-tRNA synthetase family. Phe-tRNA synthetase alpha subunit type 1 subfamily. As to quaternary structure, tetramer of two alpha and two beta subunits. Mg(2+) serves as cofactor.

The protein localises to the cytoplasm. It catalyses the reaction tRNA(Phe) + L-phenylalanine + ATP = L-phenylalanyl-tRNA(Phe) + AMP + diphosphate + H(+). In Blochmanniella pennsylvanica (strain BPEN), this protein is Phenylalanine--tRNA ligase alpha subunit.